The chain runs to 451 residues: Tubulin gamma-2 chain (451 aa).

Position 131 is a phosphoserine; by BRSK1 (serine 131). 142–148 (AGGTGSG) is a GTP binding site.

It belongs to the tubulin family. Component of the gamma-tubulin ring complex (gTuRC) consisting of TUBGCP2, TUBGCP3, TUBGCP4, TUBGCP5 and TUBGCP6 and gamma-tubulin TUBG1 or TUBG2. TUBGCP2, TUBGCP3, TUBGCP4, TUBGCP5 and TUBGCP6 assemble in a 5:5:2:1:1 stoichiometry; each is associated with a gamma-tubulin, thereby arranging 14 gamma-tubulins in a helical manner. Gamma-tubulin at the first position is blocked by TUBGCP3 at the last position, allowing 13 protafilaments to grow into a microtubule. Interacts with alpha-beta tubulin heterodimers; the interaction allows microtubules to nucleate from the gTuRC. Post-translationally, phosphorylation at Ser-131 by BRSK1 regulates centrosome duplication, possibly by mediating relocation of gamma-tubulin and its associated proteins from the cytoplasm to the centrosome.

The protein localises to the cytoplasm. Its subcellular location is the cytoskeleton. It is found in the microtubule organizing center. It localises to the centrosome. Its function is as follows. Tubulin is the major constituent of microtubules, protein filaments consisting of alpha- and beta-tubulin heterodimers. Gamma-tubulin is a key component of the gamma-tubulin ring complex (gTuRC) which mediates microtubule nucleation. The gTuRC regulates the minus-end nucleation of alpha-beta tubulin heterodimers that grow into microtubule protafilaments, a critical step in centrosome duplication and spindle formation. This Homo sapiens (Human) protein is Tubulin gamma-2 chain (TUBG2).